The sequence spans 77 residues: Acyl carrier protein (77 aa).

The 76-residue stretch at 1–76 (MSIEERVKKI…SAIDYVAKAN (76 aa)) folds into the Carrier domain. The residue at position 36 (S36) is an O-(pantetheine 4'-phosphoryl)serine.

The protein belongs to the acyl carrier protein (ACP) family. In terms of processing, 4'-phosphopantetheine is transferred from CoA to a specific serine of apo-ACP by AcpS. This modification is essential for activity because fatty acids are bound in thioester linkage to the sulfhydryl of the prosthetic group.

It localises to the cytoplasm. The protein operates within lipid metabolism; fatty acid biosynthesis. Carrier of the growing fatty acid chain in fatty acid biosynthesis. The chain is Acyl carrier protein from Haemophilus ducreyi (strain 35000HP / ATCC 700724).